The sequence spans 246 residues: Small ribosomal subunit protein uS2 (246 aa).

Belongs to the universal ribosomal protein uS2 family.

This chain is Small ribosomal subunit protein uS2, found in Azotobacter vinelandii (strain DJ / ATCC BAA-1303).